The chain runs to 311 residues: tRNA dimethylallyltransferase (311 aa).

11–18 serves as a coordination point for ATP; sequence GPTAVGKT. 13 to 18 is a binding site for substrate; sequence TAVGKT. The interaction with substrate tRNA stretch occupies residues 36–39; it reads DSVQ.

It belongs to the IPP transferase family. In terms of assembly, monomer. It depends on Mg(2+) as a cofactor.

It carries out the reaction adenosine(37) in tRNA + dimethylallyl diphosphate = N(6)-dimethylallyladenosine(37) in tRNA + diphosphate. Functionally, catalyzes the transfer of a dimethylallyl group onto the adenine at position 37 in tRNAs that read codons beginning with uridine, leading to the formation of N6-(dimethylallyl)adenosine (i(6)A). The protein is tRNA dimethylallyltransferase of Exiguobacterium sp. (strain ATCC BAA-1283 / AT1b).